The following is a 391-amino-acid chain: Heme A synthase (391 aa).

8 helical membrane-spanning segments follow: residues 37–57, 121–141, 152–172, 186–206, 229–249, 298–318, 332–352, and 354–374; these read IRLW…VGGL, RQLG…FLAA, LLAL…MVAS, LATH…QALL, TTVL…VAGI, FLHR…WIFG, LLAM…LSAA, and WQVA…ILHA. Heme is bound at residue His300. A heme-binding site is contributed by His360.

The protein belongs to the COX15/CtaA family. Type 2 subfamily. As to quaternary structure, interacts with CtaB. The cofactor is heme b.

The protein resides in the cell membrane. It carries out the reaction Fe(II)-heme o + 2 A + H2O = Fe(II)-heme a + 2 AH2. It functions in the pathway porphyrin-containing compound metabolism; heme A biosynthesis; heme A from heme O: step 1/1. Functionally, catalyzes the conversion of heme O to heme A by two successive hydroxylations of the methyl group at C8. The first hydroxylation forms heme I, the second hydroxylation results in an unstable dihydroxymethyl group, which spontaneously dehydrates, resulting in the formyl group of heme A. In Cereibacter sphaeroides (strain ATCC 17023 / DSM 158 / JCM 6121 / CCUG 31486 / LMG 2827 / NBRC 12203 / NCIMB 8253 / ATH 2.4.1.) (Rhodobacter sphaeroides), this protein is Heme A synthase.